The chain runs to 424 residues: MATAVRLLGRRVSSWRLRPLPSPLAVPQRAHSMLPVDDDINGLNEEQKQLRHTISKFVQENLAPKAQEIDQSNDFKNLREFWKQLGSLGVLGITAPVQYGGSGLGYLEHVLVMEEISRASAAVGLSYGAHSNLCINQIVRNGNEAQKEKYLPKLISGEFIGALAMSEPNAGSDVVSMRLKAEKKGDHYVLNGNKFWITNGPDADVLVVYAKTDLTAVPASRGITAFIVEKDMPGFSTSKKLDKLGMRGSNTCELVFEDCKVPAANILSQESKGVYVLMSGLDLERLVLAGGPLGIMQAVLDHTIPYLHVREAFGQKIGQFQLMQGKMADMYTRLMACRQYVYNVARACDEGHITAKDCAGVILYTAECATQVALDGIQCLGGNGYINDFPMGRFLRDAKLYEIGGGTSEVRRLVIGRAFNADFR.

The N-terminal 30 residues, 1–30, are a transit peptide targeting the mitochondrion; that stretch reads MATAVRLLGRRVSSWRLRPLPSPLAVPQRA. Lys56, Lys65, and Lys76 each carry N6-acetyllysine; alternate. Residues Lys56, Lys65, and Lys76 each carry the N6-succinyllysine; alternate modification. FAD contacts are provided by residues 163–172 and 196–198; these read LAMSEPNAGS and WIT. Position 172 (Ser172) interacts with substrate. 220 to 221 lines the substrate pocket; the sequence is SR. An N6-acetyllysine modification is found at Lys239. Lys260 bears the N6-acetyllysine; alternate mark. Lys260 carries the post-translational modification N6-succinyllysine; alternate. Substrate is bound by residues Tyr275 and 282–285; that span reads DLER. The Proton acceptor role is filled by Glu284. Arg310 lines the FAD pocket. Lys316 carries the N6-succinyllysine modification. Residues Gln321 and 378–382 each bind FAD; that span reads QCLGG. 405-406 is a substrate binding site; it reads GG. 407 to 409 serves as a coordination point for FAD; the sequence is TSE.

This sequence belongs to the acyl-CoA dehydrogenase family. In terms of assembly, homotetramer. It depends on FAD as a cofactor.

It is found in the mitochondrion matrix. The enzyme catalyses 3-methylbutanoyl-CoA + oxidized [electron-transfer flavoprotein] + H(+) = 3-methylbut-2-enoyl-CoA + reduced [electron-transfer flavoprotein]. It carries out the reaction pentanoyl-CoA + oxidized [electron-transfer flavoprotein] + H(+) = (2E)-pentenoyl-CoA + reduced [electron-transfer flavoprotein]. The catalysed reaction is hexanoyl-CoA + oxidized [electron-transfer flavoprotein] + H(+) = (2E)-hexenoyl-CoA + reduced [electron-transfer flavoprotein]. It catalyses the reaction butanoyl-CoA + oxidized [electron-transfer flavoprotein] + H(+) = (2E)-butenoyl-CoA + reduced [electron-transfer flavoprotein]. Its pathway is amino-acid degradation; L-leucine degradation; (S)-3-hydroxy-3-methylglutaryl-CoA from 3-isovaleryl-CoA: step 1/3. Functionally, catalyzes the conversion of isovaleryl-CoA/3-methylbutanoyl-CoA to 3-methylbut-2-enoyl-CoA as an intermediate step in the leucine (Leu) catabolic pathway. To a lesser extent, is also able to catalyze the oxidation of other saturated short-chain acyl-CoA thioesters as pentanoyl-CoA, hexenoyl-CoA and butenoyl-CoA. This is Isovaleryl-CoA dehydrogenase, mitochondrial (Ivd) from Rattus norvegicus (Rat).